The chain runs to 81 residues: ATP synthase subunit c, chloroplastic (81 aa).

Helical transmembrane passes span 3–23 (PIISAASVIAAGLAVGLASIG) and 57–77 (LAFMEALTIYGLVVALALLFA).

It belongs to the ATPase C chain family. As to quaternary structure, F-type ATPases have 2 components, F(1) - the catalytic core - and F(0) - the membrane proton channel. F(1) has five subunits: alpha(3), beta(3), gamma(1), delta(1), epsilon(1). F(0) has four main subunits: a(1), b(1), b'(1) and c(10-14). The alpha and beta chains form an alternating ring which encloses part of the gamma chain. F(1) is attached to F(0) by a central stalk formed by the gamma and epsilon chains, while a peripheral stalk is formed by the delta, b and b' chains.

The protein localises to the plastid. It localises to the chloroplast thylakoid membrane. In terms of biological role, f(1)F(0) ATP synthase produces ATP from ADP in the presence of a proton or sodium gradient. F-type ATPases consist of two structural domains, F(1) containing the extramembraneous catalytic core and F(0) containing the membrane proton channel, linked together by a central stalk and a peripheral stalk. During catalysis, ATP synthesis in the catalytic domain of F(1) is coupled via a rotary mechanism of the central stalk subunits to proton translocation. Functionally, key component of the F(0) channel; it plays a direct role in translocation across the membrane. A homomeric c-ring of between 10-14 subunits forms the central stalk rotor element with the F(1) delta and epsilon subunits. The polypeptide is ATP synthase subunit c, chloroplastic (Welwitschia mirabilis (Tree tumbo)).